Reading from the N-terminus, the 464-residue chain is 3-deoxy-D-manno-octulosonic acid transferase (464 aa).

A helical; Signal-anchor transmembrane segment spans residues 2–22 (MLLYYALSFILLPVYFIIILI). Residues 47-93 (DSLDFMQTSANKEEFKGDTSLRTTTYTLIREDEGLGSTYKLPLEASD) enclose the RPE1 insert domain. Catalysis depends on glutamate 107, which acts as the Proton acceptor. Residues 311–312 (PR), 352–354 (FGE), and 377–380 (NILE) contribute to the CMP site.

Belongs to the glycosyltransferase group 1 family. Glycosyltransferase 30 subfamily.

It localises to the cell inner membrane. The enzyme catalyses lipid IVA (E. coli) + CMP-3-deoxy-beta-D-manno-octulosonate = alpha-Kdo-(2-&gt;6)-lipid IVA (E. coli) + CMP + H(+). It participates in bacterial outer membrane biogenesis; LPS core biosynthesis. In terms of biological role, involved in lipopolysaccharide (LPS) biosynthesis. Catalyzes the transfer of 3-deoxy-D-manno-octulosonate (Kdo) residue(s) from CMP-Kdo to lipid IV(A), the tetraacyldisaccharide-1,4'-bisphosphate precursor of lipid A. This Rickettsia conorii (strain ATCC VR-613 / Malish 7) protein is 3-deoxy-D-manno-octulosonic acid transferase (waaA).